The chain runs to 141 residues: Nucleoside diphosphate kinase (141 aa).

The ATP site is built by K9, F57, R85, T91, R102, and N112. H115 (pros-phosphohistidine intermediate) is an active-site residue.

This sequence belongs to the NDK family. As to quaternary structure, homotetramer. It depends on Mg(2+) as a cofactor.

Its subcellular location is the cytoplasm. It carries out the reaction a 2'-deoxyribonucleoside 5'-diphosphate + ATP = a 2'-deoxyribonucleoside 5'-triphosphate + ADP. The catalysed reaction is a ribonucleoside 5'-diphosphate + ATP = a ribonucleoside 5'-triphosphate + ADP. Functionally, major role in the synthesis of nucleoside triphosphates other than ATP. The ATP gamma phosphate is transferred to the NDP beta phosphate via a ping-pong mechanism, using a phosphorylated active-site intermediate. This is Nucleoside diphosphate kinase from Chlamydia muridarum (strain MoPn / Nigg).